We begin with the raw amino-acid sequence, 135 residues long: UPF0225 protein CV_3559 (135 aa).

It belongs to the UPF0225 family.

The chain is UPF0225 protein CV_3559 from Chromobacterium violaceum (strain ATCC 12472 / DSM 30191 / JCM 1249 / CCUG 213 / NBRC 12614 / NCIMB 9131 / NCTC 9757 / MK).